The sequence spans 158 residues: Transcriptional repressor NrdR (158 aa).

The segment at Cys3 to Cys34 is a zinc-finger region. In terms of domain architecture, ATP-cone spans Ile49–His139.

It belongs to the NrdR family. Requires Zn(2+) as cofactor.

In terms of biological role, negatively regulates transcription of bacterial ribonucleotide reductase nrd genes and operons by binding to NrdR-boxes. In Kosmotoga olearia (strain ATCC BAA-1733 / DSM 21960 / TBF 19.5.1), this protein is Transcriptional repressor NrdR.